The primary structure comprises 265 residues: Pyridoxine 5'-phosphate synthase (265 aa).

Asn6 lines the 3-amino-2-oxopropyl phosphate pocket. 8 to 9 (DH) is a binding site for 1-deoxy-D-xylulose 5-phosphate. A 3-amino-2-oxopropyl phosphate-binding site is contributed by Arg17. The Proton acceptor role is filled by His42. 2 residues coordinate 1-deoxy-D-xylulose 5-phosphate: Arg44 and His49. Glu69 serves as the catalytic Proton acceptor. Thr99 serves as a coordination point for 1-deoxy-D-xylulose 5-phosphate. The Proton donor role is filled by His213. Residues Gly214 and 235–236 (GQ) each bind 3-amino-2-oxopropyl phosphate.

This sequence belongs to the PNP synthase family. As to quaternary structure, homooctamer; tetramer of dimers.

The protein resides in the cytoplasm. It carries out the reaction 3-amino-2-oxopropyl phosphate + 1-deoxy-D-xylulose 5-phosphate = pyridoxine 5'-phosphate + phosphate + 2 H2O + H(+). It functions in the pathway cofactor biosynthesis; pyridoxine 5'-phosphate biosynthesis; pyridoxine 5'-phosphate from D-erythrose 4-phosphate: step 5/5. In terms of biological role, catalyzes the complicated ring closure reaction between the two acyclic compounds 1-deoxy-D-xylulose-5-phosphate (DXP) and 3-amino-2-oxopropyl phosphate (1-amino-acetone-3-phosphate or AAP) to form pyridoxine 5'-phosphate (PNP) and inorganic phosphate. The protein is Pyridoxine 5'-phosphate synthase of Nitratiruptor sp. (strain SB155-2).